A 1018-amino-acid chain; its full sequence is UPF0182 protein Tfu_0541 (1018 aa).

The next 7 membrane-spanning stretches (helical) occupy residues 20-40 (LAPV…AANF), 64-84 (ALLF…SVYF), 115-135 (VFFW…ATAE), 171-191 (VIIG…VVVH), 212-232 (VHLS…YWLE), 254-274 (AVLY…VLFF), and 287-307 (VSLG…PAIV). 2 disordered regions span residues 497 to 570 (YPVD…QANN) and 939 to 965 (GDEA…ASSD). Acidic residues-rich tracts occupy residues 542–560 (QDQE…EEEQ) and 939–959 (GDEA…EEEQ).

The protein belongs to the UPF0182 family.

It localises to the cell membrane. The sequence is that of UPF0182 protein Tfu_0541 from Thermobifida fusca (strain YX).